The primary structure comprises 255 residues: Putative cysteine-rich repeat secretory protein 10 (255 aa).

The signal sequence occupies residues 1 to 26 (MFSSSVSISILVVVAMQFSFIHNVLS). Gnk2-homologous domains lie at 33–134 (YLQH…EIYT) and 140–252 (FKHY…LYPF).

This sequence belongs to the cysteine-rich repeat secretory protein family.

The protein resides in the secreted. In Arabidopsis thaliana (Mouse-ear cress), this protein is Putative cysteine-rich repeat secretory protein 10 (CRRSP10).